Here is a 432-residue protein sequence, read N- to C-terminus: Adenylosuccinate synthetase (432 aa).

GTP is bound by residues 13 to 19 (GDEGKGK) and 41 to 43 (GHT). Asp-14 serves as the catalytic Proton acceptor. 2 residues coordinate Mg(2+): Asp-14 and Gly-41. Residues 14 to 17 (DEGK), 39 to 42 (NAGH), Thr-130, Arg-144, Gln-225, Thr-240, and Arg-304 contribute to the IMP site. His-42 serves as the catalytic Proton donor. 300–306 (ATTGRRR) contacts substrate. Residues Arg-306, 332-334 (KLD), and 415-417 (STG) each bind GTP.

This sequence belongs to the adenylosuccinate synthetase family. Homodimer. Requires Mg(2+) as cofactor.

The protein resides in the cytoplasm. The enzyme catalyses IMP + L-aspartate + GTP = N(6)-(1,2-dicarboxyethyl)-AMP + GDP + phosphate + 2 H(+). It functions in the pathway purine metabolism; AMP biosynthesis via de novo pathway; AMP from IMP: step 1/2. Plays an important role in the de novo pathway of purine nucleotide biosynthesis. Catalyzes the first committed step in the biosynthesis of AMP from IMP. The protein is Adenylosuccinate synthetase of Baumannia cicadellinicola subsp. Homalodisca coagulata.